The following is a 330-amino-acid chain: NADH-quinone oxidoreductase subunit H (330 aa).

8 helical membrane passes run 3 to 23, 76 to 96, 118 to 138, 161 to 181, 188 to 208, 244 to 264, 272 to 292, and 307 to 327; these read AAFV…FSAL, PVFM…MAAI, VGLL…LLAG, EVVT…ISLV, AGGM…LFLI, FFIG…LIFL, FIPG…LFLW, and WLCW…TGIV.

The protein belongs to the complex I subunit 1 family. As to quaternary structure, NDH-1 is composed of 14 different subunits. Subunits NuoA, H, J, K, L, M, N constitute the membrane sector of the complex.

It localises to the cell inner membrane. It carries out the reaction a quinone + NADH + 5 H(+)(in) = a quinol + NAD(+) + 4 H(+)(out). Its function is as follows. NDH-1 shuttles electrons from NADH, via FMN and iron-sulfur (Fe-S) centers, to quinones in the respiratory chain. The immediate electron acceptor for the enzyme in this species is believed to be ubiquinone. Couples the redox reaction to proton translocation (for every two electrons transferred, four hydrogen ions are translocated across the cytoplasmic membrane), and thus conserves the redox energy in a proton gradient. This subunit may bind ubiquinone. The chain is NADH-quinone oxidoreductase subunit H from Nitratiruptor sp. (strain SB155-2).